A 346-amino-acid chain; its full sequence is Tyrosine--tRNA ligase (346 aa).

Tyr35 contacts L-tyrosine. The 'HIGH' region motif lies at 40 to 48; that stretch reads PTGEMHIGH. Positions 162, 166, 169, and 184 each coordinate L-tyrosine.

The protein belongs to the class-I aminoacyl-tRNA synthetase family. TyrS type 3 subfamily. Homodimer.

Its subcellular location is the cytoplasm. The catalysed reaction is tRNA(Tyr) + L-tyrosine + ATP = L-tyrosyl-tRNA(Tyr) + AMP + diphosphate + H(+). In terms of biological role, catalyzes the attachment of tyrosine to tRNA(Tyr) in a two-step reaction: tyrosine is first activated by ATP to form Tyr-AMP and then transferred to the acceptor end of tRNA(Tyr). This is Tyrosine--tRNA ligase from Haloarcula marismortui (strain ATCC 43049 / DSM 3752 / JCM 8966 / VKM B-1809) (Halobacterium marismortui).